We begin with the raw amino-acid sequence, 207 residues long: FMN-dependent NADH:quinone oxidoreductase (207 aa).

Position 10 (S10) interacts with FMN.

Belongs to the azoreductase type 1 family. As to quaternary structure, homodimer. The cofactor is FMN.

It carries out the reaction 2 a quinone + NADH + H(+) = 2 a 1,4-benzosemiquinone + NAD(+). The catalysed reaction is N,N-dimethyl-1,4-phenylenediamine + anthranilate + 2 NAD(+) = 2-(4-dimethylaminophenyl)diazenylbenzoate + 2 NADH + 2 H(+). Functionally, quinone reductase that provides resistance to thiol-specific stress caused by electrophilic quinones. In terms of biological role, also exhibits azoreductase activity. Catalyzes the reductive cleavage of the azo bond in aromatic azo compounds to the corresponding amines. The protein is FMN-dependent NADH:quinone oxidoreductase of Shouchella clausii (strain KSM-K16) (Alkalihalobacillus clausii).